The chain runs to 192 residues: MSIENTLPTYPSLALALSQQAVALTPAEMHGLISGMLCGGSKDNGWQTLVHDLTNEGVAFPQALSLPLQQLHEATQEALENEGFMFQLLIPEGEDVTVFDRADALSGWVNHFLLGLGMLQPKLAQVKDEVGEAIDDLRNIAQLGYDEDEDQEELAQSLEEVVEYVRVAAILCHIEFTQQKPTAPEMHKPTLH.

Belongs to the UPF0149 family.

The chain is UPF0149 protein YPO0911/y3298/YP_3608 from Yersinia pestis.